We begin with the raw amino-acid sequence, 275 residues long: Shikimate dehydrogenase (NADP(+)) (275 aa).

Shikimate-binding positions include 15 to 17 (SKS) and Thr62. Catalysis depends on Lys66, which acts as the Proton acceptor. Glu78 serves as a coordination point for NADP(+). Residues Asn87 and Asp102 each coordinate shikimate. NADP(+) contacts are provided by residues 128–132 (GAGGA), 151–156 (NRTAEK), and Leu218. Residue Tyr220 coordinates shikimate. Gly241 contributes to the NADP(+) binding site.

The protein belongs to the shikimate dehydrogenase family. Homodimer.

It catalyses the reaction shikimate + NADP(+) = 3-dehydroshikimate + NADPH + H(+). Its pathway is metabolic intermediate biosynthesis; chorismate biosynthesis; chorismate from D-erythrose 4-phosphate and phosphoenolpyruvate: step 4/7. In terms of biological role, involved in the biosynthesis of the chorismate, which leads to the biosynthesis of aromatic amino acids. Catalyzes the reversible NADPH linked reduction of 3-dehydroshikimate (DHSA) to yield shikimate (SA). This is Shikimate dehydrogenase (NADP(+)) from Shouchella clausii (strain KSM-K16) (Alkalihalobacillus clausii).